The sequence spans 154 residues: Protein X (154 aa).

The interval 68–117 (PCALRFTSARRMETTVNAHQVLPKVLHKRTLGLSAMSTTDLEAYFKDCLF) is mitochondrial targeting sequence.

It belongs to the orthohepadnavirus protein X family. May form homodimer. May interact with host CEBPA, CFLAR, CREB1, DDB1, E4F1, HBXIP, HSPD1/HSP60, NFKBIA, POLR2E and SMAD4. Interacts with host SMC5-SMC6 complex and induces its degradation. Interacts with host TRPC4AP; leading to prevent ubiquitination of TRPC4AP. Interacts with host PLSCR1; this interaction promotes ubiquitination and degradation of HBx and impairs HBx-mediated cell proliferation. In terms of processing, a fraction may be phosphorylated in insect cells and HepG2 cells, a human hepatoblastoma cell line. Phosphorylated in vitro by host protein kinase C or mitogen-activated protein kinase. N-acetylated in insect cells.

Its subcellular location is the host cytoplasm. It localises to the host nucleus. It is found in the host mitochondrion. In terms of biological role, multifunctional protein that plays a role in silencing host antiviral defenses and promoting viral transcription. Does not seem to be essential for HBV infection. May be directly involved in development of cirrhosis and liver cancer (hepatocellular carcinoma). Most of cytosolic activities involve modulation of cytosolic calcium. The effect on apoptosis is controversial depending on the cell types in which the studies have been conducted. May induce apoptosis by localizing in mitochondria and causing loss of mitochondrial membrane potential. May also modulate apoptosis by binding host CFLAR, a key regulator of the death-inducing signaling complex (DISC). Promotes viral transcription by using the host E3 ubiquitin ligase DDB1 to target the SMC5-SMC6 complex to proteasomal degradation. This host complex would otherwise bind to viral episomal DNA, and prevents its transcription. Moderately stimulates transcription of many different viral and cellular transcription elements. Promoters and enhancers stimulated by HBx contain DNA binding sites for NF-kappa-B, AP-1, AP-2, c-EBP, ATF/CREB, or the calcium-activated factor NF-AT. This chain is Protein X, found in Hepatitis B virus genotype C subtype adr (strain Japan/adr4/1983) (HBV-C).